The following is a 466-amino-acid chain: Phage-like element PBSX protein XkdK (466 aa).

The protein belongs to the myoviridae tail sheath protein family.

This chain is Phage-like element PBSX protein XkdK (xkdK), found in Bacillus subtilis (strain 168).